A 707-amino-acid polypeptide reads, in one-letter code: SPX domain-containing membrane protein At4g11810 (707 aa).

The SPX domain maps to 2–145 (VAFGKKLKER…GYRFTNYYVK (144 aa)). Transmembrane regions (helical) follow at residues 252–272 (FMSL…TYII), 283–303 (LGAA…AQLF), 320–340 (LIFS…AYDF), 342–361 (SLAL…ARAV), 380–400 (AGFV…AGLL), and 416–436 (LPGW…AISF). Residues 481–498 (EETEHDEEDDGDGSEESS) show a composition bias toward acidic residues. A disordered region spans residues 481–503 (EETEHDEEDDGDGSEESSDDSRK). 5 helical membrane-spanning segments follow: residues 523 to 543 (LLIY…SSVV), 557 to 577 (IFLF…GSYI), 586 to 606 (ILLA…HVVI), 614 to 634 (VISG…NLSL), and 679 to 699 (MLLN…ILAT).

This sequence belongs to the major facilitator superfamily.

The protein localises to the membrane. The sequence is that of SPX domain-containing membrane protein At4g11810 from Arabidopsis thaliana (Mouse-ear cress).